The following is a 149-amino-acid chain: Putative inactive group IIC secretory phospholipase A2 (149 aa).

The signal sequence occupies residues Met1–Ser18. 4 disulfide bridges follow: Cys44–Cys142, Cys77–Cys107, Cys95–Cys112, and Cys97–Cys105. The Ca(2+) site is built by Tyr45, Gly47, and Gly49.

The protein belongs to the phospholipase A2 family. It depends on Ca(2+) as a cofactor.

The protein localises to the secreted. In terms of biological role, inactive phospholipase. The sequence is that of Putative inactive group IIC secretory phospholipase A2 (PLA2G2C) from Homo sapiens (Human).